The primary structure comprises 162 residues: ATP synthase subunit b (162 aa).

Residues 10–29 (LIWTIINFAVLLWGMHRFLY) traverse the membrane as a helical segment.

This sequence belongs to the ATPase B chain family. In terms of assembly, F-type ATPases have 2 components, F(1) - the catalytic core - and F(0) - the membrane proton channel. F(1) has five subunits: alpha(3), beta(3), gamma(1), delta(1), epsilon(1). F(0) has three main subunits: a(1), b(2) and c(10-14). The alpha and beta chains form an alternating ring which encloses part of the gamma chain. F(1) is attached to F(0) by a central stalk formed by the gamma and epsilon chains, while a peripheral stalk is formed by the delta and b chains.

The protein localises to the cell membrane. Functionally, f(1)F(0) ATP synthase produces ATP from ADP in the presence of a proton or sodium gradient. F-type ATPases consist of two structural domains, F(1) containing the extramembraneous catalytic core and F(0) containing the membrane proton channel, linked together by a central stalk and a peripheral stalk. During catalysis, ATP synthesis in the catalytic domain of F(1) is coupled via a rotary mechanism of the central stalk subunits to proton translocation. Component of the F(0) channel, it forms part of the peripheral stalk, linking F(1) to F(0). This chain is ATP synthase subunit b, found in Symbiobacterium thermophilum (strain DSM 24528 / JCM 14929 / IAM 14863 / T).